A 199-amino-acid polypeptide reads, in one-letter code: Recombination protein RecR (199 aa).

Residues 57-72 (CSICGNITESDPCEIC) form a C4-type zinc finger. Residues 80–176 (STIMVVEQPK…KVTRLAAGLA (97 aa)) form the Toprim domain.

The protein belongs to the RecR family.

In terms of biological role, may play a role in DNA repair. It seems to be involved in an RecBC-independent recombinational process of DNA repair. It may act with RecF and RecO. This Lactobacillus johnsonii (strain CNCM I-12250 / La1 / NCC 533) protein is Recombination protein RecR.